We begin with the raw amino-acid sequence, 213 residues long: Peptidyl-tRNA hydrolase (213 aa).

Tyr-15 is a tRNA binding site. His-20 serves as the catalytic Proton acceptor. TRNA contacts are provided by Phe-66, Asn-68, and Asn-114. The tract at residues 187–213 (HTTKPPRPKPPRPAAAPVDAPAAPGDQ) is disordered. The segment covering 201-213 (AAPVDAPAAPGDQ) has biased composition (low complexity).

Belongs to the PTH family. In terms of assembly, monomer.

It is found in the cytoplasm. It catalyses the reaction an N-acyl-L-alpha-aminoacyl-tRNA + H2O = an N-acyl-L-amino acid + a tRNA + H(+). In terms of biological role, hydrolyzes ribosome-free peptidyl-tRNAs (with 1 or more amino acids incorporated), which drop off the ribosome during protein synthesis, or as a result of ribosome stalling. Catalyzes the release of premature peptidyl moieties from peptidyl-tRNA molecules trapped in stalled 50S ribosomal subunits, and thus maintains levels of free tRNAs and 50S ribosomes. The sequence is that of Peptidyl-tRNA hydrolase from Paracidovorax citrulli (strain AAC00-1) (Acidovorax citrulli).